The chain runs to 326 residues: UDP-3-O-acylglucosamine N-acyltransferase (326 aa).

Catalysis depends on H233, which acts as the Proton acceptor.

This sequence belongs to the transferase hexapeptide repeat family. LpxD subfamily. In terms of assembly, homotrimer.

It catalyses the reaction a UDP-3-O-[(3R)-3-hydroxyacyl]-alpha-D-glucosamine + a (3R)-hydroxyacyl-[ACP] = a UDP-2-N,3-O-bis[(3R)-3-hydroxyacyl]-alpha-D-glucosamine + holo-[ACP] + H(+). The protein operates within bacterial outer membrane biogenesis; LPS lipid A biosynthesis. In terms of biological role, catalyzes the N-acylation of UDP-3-O-acylglucosamine using 3-hydroxyacyl-ACP as the acyl donor. Is involved in the biosynthesis of lipid A, a phosphorylated glycolipid that anchors the lipopolysaccharide to the outer membrane of the cell. This is UDP-3-O-acylglucosamine N-acyltransferase from Aquifex aeolicus (strain VF5).